A 276-amino-acid chain; its full sequence is Type II pantothenate kinase (276 aa).

8–15 (DAGGTLTK) provides a ligand contact to ATP. Residue Glu76 is the Proton acceptor of the active site. ATP is bound by residues Thr105, 127–131 (GGTIM), Phe143, and Ser230.

It belongs to the type II pantothenate kinase family. In terms of assembly, homodimer.

Its subcellular location is the cytoplasm. The enzyme catalyses (R)-pantothenate + ATP = (R)-4'-phosphopantothenate + ADP + H(+). It functions in the pathway cofactor biosynthesis; coenzyme A biosynthesis; CoA from (R)-pantothenate: step 1/5. Functionally, catalyzes the phosphorylation of pantothenate (Pan), the first step in CoA biosynthesis. The chain is Type II pantothenate kinase from Bacillus cereus (strain ATCC 10987 / NRS 248).